A 207-amino-acid chain; its full sequence is Prolactin (207 aa).

Positions 1 to 20 (KSRLYFAVTVLMCAFVSING) are cleaved as a signal peptide. 2 cysteine pairs are disulfide-bonded: C66/C180 and C197/C207.

The protein belongs to the somatotropin/prolactin family. In terms of tissue distribution, pituitary gland.

The protein localises to the secreted. The polypeptide is Prolactin (prl) (Hypophthalmichthys molitrix (Silver carp)).